Reading from the N-terminus, the 463-residue chain is Glutamate--tRNA ligase 1 (463 aa).

Residues 11 to 21 carry the 'HIGH' region motif; sequence PSPTGYLHIGG. The 'KMSKS' region signature appears at 240 to 244; that stretch reads KLSKR. Lys-243 is a binding site for ATP.

This sequence belongs to the class-I aminoacyl-tRNA synthetase family. Glutamate--tRNA ligase type 1 subfamily. Monomer.

The protein localises to the cytoplasm. The catalysed reaction is tRNA(Glu) + L-glutamate + ATP = L-glutamyl-tRNA(Glu) + AMP + diphosphate. In terms of biological role, catalyzes the attachment of glutamate to tRNA(Glu) in a two-step reaction: glutamate is first activated by ATP to form Glu-AMP and then transferred to the acceptor end of tRNA(Glu). The polypeptide is Glutamate--tRNA ligase 1 (Campylobacter jejuni subsp. doylei (strain ATCC BAA-1458 / RM4099 / 269.97)).